Consider the following 441-residue polypeptide: Protein kinase C and casein kinase substrate in neurons protein 1 (441 aa).

S2 and S76 each carry phosphoserine. Positions 10–280 (EEITDSFWEV…AIRGADAQED (271 aa)) constitute an F-BAR domain. Residues 23–272 (KRTVKRIDDG…HVYRELEQAI (250 aa)) adopt a coiled-coil conformation. T181 bears the Phosphothreonine mark. Residues 297-380 (PQFEEWNPDL…ANGGANPFED (84 aa)) are disordered. Positions 311 to 321 (AKKEKQPKKAE) are enriched in basic and acidic residues. Over residues 324–355 (TLSNATGAVESTSQAGDRGSVSSYDRGQTYAT) the composition is skewed to polar residues. S343, S345, S346, S358, and S362 each carry phosphoserine. The 60-residue stretch at 382–441 (AKGVRVRALYDYDGQEQDELSFKAGDELTKLGEEDEQGWCRGRLDSGQLGLYPANYVEAI) folds into the SH3 domain. Y391 is modified (phosphotyrosine). A phosphoserine mark is found at S402 and S427.

Belongs to the PACSIN family. Homodimer. May form heterooligomers with other PACSINs. Interacts with both COBL and DBNL. Identified in a complex composed of COBL, PACSIN1 and WASL. Interacts with EHD3. Interacts (via SH3 domain) with SYNJ1 and WASL. Interacts (via SH3 domain) with DNM1; the interaction is reduced by DNM1 phosphorylation. Interacts with DNM2 and DNM3. Interacts with MAPT. Interacts with EHD1. Interacts with TRPV4. Post-translationally, phosphorylated by casein kinase 2 (CK2) and protein kinase C (PKC). As to expression, highly expressed in brain. Detected in hippocampus and dorsal root ganglion neurons. Detected in rod photoreceptor terminals in the outer plexiform layer of the retina (at protein level). In CNS neurons, high levels in the pyramidal cells of the hippocampus, Purkinje cells of the cerebellum and large neurons of the cortex and brain stem.

It is found in the cytoplasm. The protein localises to the cell projection. It localises to the synapse. Its subcellular location is the synaptosome. The protein resides in the ruffle membrane. It is found in the membrane. The protein localises to the cytoplasmic vesicle membrane. It localises to the cytosol. Its subcellular location is the cell membrane. Functionally, binds to membranes via its F-BAR domain and mediates membrane tubulation. Plays a role in the reorganization of the microtubule cytoskeleton via its interaction with MAPT; this decreases microtubule stability and inhibits MAPT-induced microtubule polymerization. Plays a role in cellular transport processes by recruiting DNM1, DNM2 and DNM3 to membranes. Plays a role in the reorganization of the actin cytoskeleton and in neuron morphogenesis via its interaction with COBL and WASL, and by recruiting COBL to the cell cortex. Plays a role in the regulation of neurite formation, neurite branching and the regulation of neurite length. Required for normal synaptic vesicle endocytosis; this process retrieves previously released neurotransmitters to accommodate multiple cycles of neurotransmission. Required for normal excitatory and inhibitory synaptic transmission. This is Protein kinase C and casein kinase substrate in neurons protein 1 (Pacsin1) from Mus musculus (Mouse).